A 371-amino-acid polypeptide reads, in one-letter code: Flagellar P-ring protein (371 aa).

Positions 1-28 (MPARPTPPAVPLALALAAALAAPAPAAA) are cleaved as a signal peptide.

The protein belongs to the FlgI family. The basal body constitutes a major portion of the flagellar organelle and consists of four rings (L,P,S, and M) mounted on a central rod.

It is found in the periplasm. The protein localises to the bacterial flagellum basal body. Assembles around the rod to form the L-ring and probably protects the motor/basal body from shearing forces during rotation. The polypeptide is Flagellar P-ring protein (Anaeromyxobacter dehalogenans (strain 2CP-C)).